A 424-amino-acid chain; its full sequence is Kynurenine--oxoglutarate transaminase 1 (424 aa).

Glycine 36 is a substrate binding site. Lysine 82 is modified (N6-succinyllysine). Asparagine 185 contacts substrate. Residue lysine 247 is modified to N6-(pyridoxal phosphate)lysine. Arginine 398 provides a ligand contact to substrate. An N6-succinyllysine modification is found at lysine 413.

It belongs to the class-I pyridoxal-phosphate-dependent aminotransferase family. In terms of assembly, homodimer. It depends on pyridoxal 5'-phosphate as a cofactor.

The protein localises to the cytoplasm. It is found in the cytosol. The catalysed reaction is L-kynurenine + 2-oxoglutarate = kynurenate + L-glutamate + H2O. It carries out the reaction 3-phenylpyruvate + L-glutamine = 2-oxoglutaramate + L-phenylalanine. It catalyses the reaction an S-substituted L-cysteine + H2O = a thiol + pyruvate + NH4(+). The protein operates within amino-acid degradation; L-kynurenine degradation; kynurenate from L-kynurenine: step 1/2. Catalyzes the irreversible transamination of the L-tryptophan metabolite L-kynurenine to form kynurenic acid (KA), an intermediate in the tryptophan catabolic pathway which is also a broad spectrum antagonist of the three ionotropic excitatory amino acid receptors among others. Metabolizes the cysteine conjugates of certain halogenated alkenes and alkanes to form reactive metabolites. Catalyzes the beta-elimination of S-conjugates and Se-conjugates of L-(seleno)cysteine, resulting in the cleavage of the C-S or C-Se bond. The protein is Kynurenine--oxoglutarate transaminase 1 (Kyat1) of Mus musculus (Mouse).